Reading from the N-terminus, the 61-residue chain is Large ribosomal subunit protein uL30 (61 aa).

It belongs to the universal ribosomal protein uL30 family. In terms of assembly, part of the 50S ribosomal subunit.

This is Large ribosomal subunit protein uL30 from Marinomonas sp. (strain MWYL1).